Here is a 458-residue protein sequence, read N- to C-terminus: Exodeoxyribonuclease 7 large subunit (458 aa).

The protein belongs to the XseA family. Heterooligomer composed of large and small subunits.

Its subcellular location is the cytoplasm. The catalysed reaction is Exonucleolytic cleavage in either 5'- to 3'- or 3'- to 5'-direction to yield nucleoside 5'-phosphates.. Functionally, bidirectionally degrades single-stranded DNA into large acid-insoluble oligonucleotides, which are then degraded further into small acid-soluble oligonucleotides. This chain is Exodeoxyribonuclease 7 large subunit, found in Halalkalibacterium halodurans (strain ATCC BAA-125 / DSM 18197 / FERM 7344 / JCM 9153 / C-125) (Bacillus halodurans).